The chain runs to 70 residues: Drosomycin (70 aa).

The N-terminal stretch at 1 to 20 (MMQIKYLFALFAVLMLVVLG) is a signal peptide. Residues 21 to 26 (ANEADA) constitute a propeptide that is removed on maturation. Disulfide bonds link C28/C70, C37/C59, C45/C65, and C49/C67. N-linked (GlcNAc...) asparagine glycosylation is present at N42.

In terms of tissue distribution, hemolymph (at protein level). Synthesized in the fat body and is secreted into the blood. In larvae, expressed in the visceral branches and posterior spiracles of the trachea.

It localises to the secreted. Functionally, possesses antifungal activity and is active against a relatively broad spectrum of filamentous fungi. It inhibits spore germination at high concentrations and at low concentrations delays growth of hyphae which subsequently exhibit abnormal morphology. Spz C-106 in the hemolymph controls expression of the antifungal peptide by acting as a ligand of Tl and inducing an intracellular signaling pathway. Part of a psh-dependent Toll pathway, which may function in activating the systematic immune response in response to localized melanization of the tracheal system. The sequence is that of Drosomycin (Drs) from Drosophila melanogaster (Fruit fly).